The primary structure comprises 688 residues: Glycine--tRNA ligase beta subunit (688 aa).

This sequence belongs to the class-II aminoacyl-tRNA synthetase family. Tetramer of two alpha and two beta subunits.

The protein localises to the cytoplasm. The catalysed reaction is tRNA(Gly) + glycine + ATP = glycyl-tRNA(Gly) + AMP + diphosphate. This is Glycine--tRNA ligase beta subunit from Aliivibrio fischeri (strain ATCC 700601 / ES114) (Vibrio fischeri).